The primary structure comprises 576 residues: Proline--tRNA ligase (576 aa).

It belongs to the class-II aminoacyl-tRNA synthetase family. ProS type 1 subfamily. Homodimer.

The protein resides in the cytoplasm. It carries out the reaction tRNA(Pro) + L-proline + ATP = L-prolyl-tRNA(Pro) + AMP + diphosphate. Functionally, catalyzes the attachment of proline to tRNA(Pro) in a two-step reaction: proline is first activated by ATP to form Pro-AMP and then transferred to the acceptor end of tRNA(Pro). As ProRS can inadvertently accommodate and process non-cognate amino acids such as alanine and cysteine, to avoid such errors it has two additional distinct editing activities against alanine. One activity is designated as 'pretransfer' editing and involves the tRNA(Pro)-independent hydrolysis of activated Ala-AMP. The other activity is designated 'posttransfer' editing and involves deacylation of mischarged Ala-tRNA(Pro). The misacylated Cys-tRNA(Pro) is not edited by ProRS. This chain is Proline--tRNA ligase, found in Magnetococcus marinus (strain ATCC BAA-1437 / JCM 17883 / MC-1).